A 113-amino-acid chain; its full sequence is Sperm-associated antigen 11B (113 aa).

Residues 1–26 form the signal peptide; it reads MIPRLLPFFASLLFAALLFPGLSNAS. 3 disulfide bridges follow: cysteine 80-cysteine 108, cysteine 87-cysteine 101, and cysteine 91-cysteine 109.

Belongs to the beta-defensin family.

The protein localises to the secreted. In terms of biological role, has antimicrobial activity against E.coli. Plays a role in the defense response in the male reproductive tract, contributing to sperm maturation, storage and protection. This Mus musculus (Mouse) protein is Sperm-associated antigen 11B.